The following is a 308-amino-acid chain: Ribosomal RNA large subunit methyltransferase F (308 aa).

The protein belongs to the methyltransferase superfamily. METTL16/RlmF family.

The protein localises to the cytoplasm. The enzyme catalyses adenosine(1618) in 23S rRNA + S-adenosyl-L-methionine = N(6)-methyladenosine(1618) in 23S rRNA + S-adenosyl-L-homocysteine + H(+). In terms of biological role, specifically methylates the adenine in position 1618 of 23S rRNA. The sequence is that of Ribosomal RNA large subunit methyltransferase F from Escherichia coli O17:K52:H18 (strain UMN026 / ExPEC).